The chain runs to 458 residues: RuvB-like helicase 1 (458 aa).

71-78 contributes to the ATP binding site; sequence GGPGTGKT.

Belongs to the RuvB family. As to quaternary structure, may form heterododecamers with RVB2. Component of the SWR1 chromatin remodeling complex, the INO80 chromatin remodeling complex, and of the R2TP complex.

The protein localises to the nucleus. It carries out the reaction ATP + H2O = ADP + phosphate + H(+). DNA helicase which participates in several chromatin remodeling complexes, including the SWR1 and the INO80 complexes. The SWR1 complex mediates the ATP-dependent exchange of histone H2A for the H2A variant HZT1 leading to transcriptional regulation of selected genes by chromatin remodeling. The INO80 complex remodels chromatin by shifting nucleosomes and is involved in DNA repair. Also involved in pre-rRNA processing. This chain is RuvB-like helicase 1 (RVB1), found in Gibberella zeae (strain ATCC MYA-4620 / CBS 123657 / FGSC 9075 / NRRL 31084 / PH-1) (Wheat head blight fungus).